Reading from the N-terminus, the 781-residue chain is Probable beta-D-xylosidase 5 (781 aa).

The signal sequence occupies residues 1-23 (MSIRRFVRLSLLIIALVSSLCES). N43, N103, and N123 each carry an N-linked (GlcNAc...) asparagine glycan. D291 is an active-site residue. 6 N-linked (GlcNAc...) asparagine glycosylation sites follow: N342, N424, N504, N543, N601, and N653.

It belongs to the glycosyl hydrolase 3 family.

It is found in the secreted. Its subcellular location is the extracellular space. It localises to the extracellular matrix. This Arabidopsis thaliana (Mouse-ear cress) protein is Probable beta-D-xylosidase 5 (BXL5).